Here is a 962-residue protein sequence, read N- to C-terminus: Glycine dehydrogenase (decarboxylating) (962 aa).

At Lys-709 the chain carries N6-(pyridoxal phosphate)lysine.

Belongs to the GcvP family. The glycine cleavage system is composed of four proteins: P, T, L and H. It depends on pyridoxal 5'-phosphate as a cofactor.

It carries out the reaction N(6)-[(R)-lipoyl]-L-lysyl-[glycine-cleavage complex H protein] + glycine + H(+) = N(6)-[(R)-S(8)-aminomethyldihydrolipoyl]-L-lysyl-[glycine-cleavage complex H protein] + CO2. The glycine cleavage system catalyzes the degradation of glycine. The P protein binds the alpha-amino group of glycine through its pyridoxal phosphate cofactor; CO(2) is released and the remaining methylamine moiety is then transferred to the lipoamide cofactor of the H protein. In Shewanella baltica (strain OS195), this protein is Glycine dehydrogenase (decarboxylating).